A 390-amino-acid chain; its full sequence is Putative 8-amino-7-oxononanoate synthase (390 aa).

Residue R19 participates in substrate binding. Position 105–106 (105–106) interacts with pyridoxal 5'-phosphate; sequence GY. Residue H130 participates in substrate binding. Residues S177, 202–205, and 234–237 each bind pyridoxal 5'-phosphate; these read DEAH and TFSK. An N6-(pyridoxal phosphate)lysine modification is found at K237. T351 contacts substrate.

This sequence belongs to the class-II pyridoxal-phosphate-dependent aminotransferase family. BioF subfamily. As to quaternary structure, homodimer. The cofactor is pyridoxal 5'-phosphate.

It carries out the reaction 6-carboxyhexanoyl-[ACP] + L-alanine + H(+) = (8S)-8-amino-7-oxononanoate + holo-[ACP] + CO2. It participates in cofactor biosynthesis; biotin biosynthesis. Catalyzes the decarboxylative condensation of pimeloyl-[acyl-carrier protein] and L-alanine to produce 8-amino-7-oxononanoate (AON), [acyl-carrier protein], and carbon dioxide. The protein is Putative 8-amino-7-oxononanoate synthase (bioF) of Geobacillus kaustophilus (strain HTA426).